We begin with the raw amino-acid sequence, 286 residues long: Large ribosomal subunit protein uL3 (286 aa).

The residue at position 152 (Q152) is an N5-methylglutamine. Over residues 246–265 (EAAAAAAAAEEQAAMEAAEA) the composition is skewed to low complexity. Residues 246–286 (EAAAAAAAAEEQAAMEAAEAAEAKTDTVAEAEAAEKKEGDA) are disordered. Positions 266–286 (AEAKTDTVAEAEAAEKKEGDA) are enriched in basic and acidic residues.

This sequence belongs to the universal ribosomal protein uL3 family. Part of the 50S ribosomal subunit. Forms a cluster with proteins L14 and L19. In terms of processing, methylated by PrmB.

Functionally, one of the primary rRNA binding proteins, it binds directly near the 3'-end of the 23S rRNA, where it nucleates assembly of the 50S subunit. The chain is Large ribosomal subunit protein uL3 from Roseobacter denitrificans (strain ATCC 33942 / OCh 114) (Erythrobacter sp. (strain OCh 114)).